Consider the following 287-residue polypeptide: Large ribosomal subunit protein uL2 (287 aa).

2 disordered regions span residues 25-57 and 203-287; these read TKTE…RGGG and LSAG…GRES. 2 stretches are compositionally biased toward basic residues: residues 209–220 and 259–287; these read GRNRWKGRRPKV and TRNR…GRES.

Belongs to the universal ribosomal protein uL2 family. As to quaternary structure, part of the 50S ribosomal subunit. Forms a bridge to the 30S subunit in the 70S ribosome.

Its function is as follows. One of the primary rRNA binding proteins. Required for association of the 30S and 50S subunits to form the 70S ribosome, for tRNA binding and peptide bond formation. It has been suggested to have peptidyltransferase activity; this is somewhat controversial. Makes several contacts with the 16S rRNA in the 70S ribosome. The protein is Large ribosomal subunit protein uL2 of Nostoc punctiforme (strain ATCC 29133 / PCC 73102).